The primary structure comprises 274 residues: Remorin 4.2 (274 aa).

Basic and acidic residues predominate over residues 1–30; the sequence is MLTLYHQERSPDATSNDRDETPETVVREVH. Disordered regions lie at residues 1 to 71, 117 to 157, and 218 to 245; these read MLTL…EGEN, TDHE…TVQR, and AMEK…AKRG. Polar residues-rich tracts occupy residues 61–71 and 145–156; these read RSATTMSEGEN and GPGQSRVGSTVQ. A coiled-coil region spans residues 204 to 239; the sequence is MKKIERKLEERKAKAMEKTQNNVAKAQRKAEERRAT. Positions 231 to 245 are enriched in basic and acidic residues; it reads RKAEERRATAEAKRG.

Belongs to the remorin family. Forms homodimer and heterodimer with REM4.1. Interacts with KIN11. Probably ubiquitinated and degraded by the 26S proteasome pathway. In terms of tissue distribution, predominantly detected in bud, stem, root, flower, silique, and leaves, and enhanced dramatically in senescence leaf.

It is found in the cell membrane. In terms of biological role, collaborates with REM4.1 to positively regulate the BCTV and BSCTV susceptibility. The protein is Remorin 4.2 of Arabidopsis thaliana (Mouse-ear cress).